Reading from the N-terminus, the 175-residue chain is ATP synthase subunit b (175 aa).

The chain crosses the membrane as a helical span at residues 13–33 (LLSPNPGLIFWTAVTFLLLLL).

It belongs to the ATPase B chain family. In terms of assembly, F-type ATPases have 2 components, F(1) - the catalytic core - and F(0) - the membrane proton channel. F(1) has five subunits: alpha(3), beta(3), gamma(1), delta(1), epsilon(1). F(0) has four main subunits: a(1), b(2) and c(10-14). The alpha and beta chains form an alternating ring which encloses part of the gamma chain. F(1) is attached to F(0) by a central stalk formed by the gamma and epsilon chains, while a peripheral stalk is formed by the delta and b chains.

The protein resides in the cell inner membrane. Functionally, f(1)F(0) ATP synthase produces ATP from ADP in the presence of a proton or sodium gradient. F-type ATPases consist of two structural domains, F(1) containing the extramembraneous catalytic core and F(0) containing the membrane proton channel, linked together by a central stalk and a peripheral stalk. During catalysis, ATP synthesis in the catalytic domain of F(1) is coupled via a rotary mechanism of the central stalk subunits to proton translocation. Component of the F(0) channel, it forms part of the peripheral stalk, linking F(1) to F(0). The protein is ATP synthase subunit b of Chloroherpeton thalassium (strain ATCC 35110 / GB-78).